A 552-amino-acid chain; its full sequence is Probable protein kinase UbiB (552 aa).

Residues 121–504 form the Protein kinase domain; sequence HFDTVPLASA…QGLQRRVVNA (384 aa). ATP contacts are provided by residues 127-135 and K149; that span reads LASASISQV. The Proton acceptor role is filled by D284. 2 helical membrane passes run 501-521 and 530-550; these read VVNAIVGSGLLVAAAVLYGLH and IPVWSLISGCIGALALFSAWW.

It belongs to the ABC1 family. UbiB subfamily.

Its subcellular location is the cell inner membrane. It functions in the pathway cofactor biosynthesis; ubiquinone biosynthesis [regulation]. Is probably a protein kinase regulator of UbiI activity which is involved in aerobic coenzyme Q (ubiquinone) biosynthesis. This is Probable protein kinase UbiB from Xylella fastidiosa (strain M23).